The sequence spans 230 residues: Flavin-dependent thymidylate synthase (230 aa).

In terms of domain architecture, ThyX spans 1–217 (MEIKVLEKGF…PVTYEAFLNF (217 aa)). Residues S55, 78-80 (RHR), and E86 contribute to the FAD site. DUMP contacts are provided by residues 75-78 (QLVR), 86-90 (ERSGR), and R156. The ThyX motif signature appears at 78 to 88 (RHRIASINERS). FAD contacts are provided by residues 172 to 174 (NAR) and N178. R183 serves as a coordination point for dUMP. R183 acts as the Involved in ionization of N3 of dUMP, leading to its activation in catalysis.

Belongs to the thymidylate synthase ThyX family. Homotetramer. FAD is required as a cofactor.

The enzyme catalyses dUMP + (6R)-5,10-methylene-5,6,7,8-tetrahydrofolate + NADPH + H(+) = dTMP + (6S)-5,6,7,8-tetrahydrofolate + NADP(+). It participates in pyrimidine metabolism; dTTP biosynthesis. In terms of biological role, catalyzes the reductive methylation of 2'-deoxyuridine-5'-monophosphate (dUMP) to 2'-deoxythymidine-5'-monophosphate (dTMP) while utilizing 5,10-methylenetetrahydrofolate (mTHF) as the methyl donor, and NADPH and FADH(2) as the reductant. This chain is Flavin-dependent thymidylate synthase, found in Kosmotoga olearia (strain ATCC BAA-1733 / DSM 21960 / TBF 19.5.1).